The sequence spans 327 residues: Tumor necrosis factor receptor superfamily member 6 (327 aa).

Positions 1-21 (MLWIWAVLPLVLAGSQLRVHT) are cleaved as a signal peptide. Over 22–169 (QGTNSISESL…NCRKQSPRNR (148 aa)) the chain is Extracellular. A glycan (N-linked (GlcNAc...) asparagine) is linked at N43. TNFR-Cys repeat units lie at residues 43–79 (NCSE…PTCA), 80–123 (PCTE…NTKC), and 124–162 (KCKP…TNCR). 9 disulfides stabilise this stretch: C44-C55, C56-C69, C59-C78, C81-C97, C100-C115, C103-C123, C125-C139, C142-C153, and C145-C161. N-linked (GlcNAc...) asparagine glycosylation occurs at N114. Residues 170–186 (LWLLTILVLLIPLVFIY) form a helical membrane-spanning segment. Over 187-327 (RKYRKRKCWK…GNENEGQCLE (141 aa)) the chain is Cytoplasmic. C194 carries the S-palmitoyl cysteine lipid modification. The interval 204-309 (SRTSSRETIP…DKFQDMVQKD (106 aa)) is interaction with HIPK3. Position 206 is a phosphothreonine (T206). S217 and S220 each carry phosphoserine. An interaction with CALM region spans residues 222–246 (SKYIPRIAEDMTIQEAKKFARENNI). A Death domain is found at 222-306 (SKYIPRIAED…RTLDKFQDMV (85 aa)). The interval 308 to 327 (KDLGKSTPDTGNENEGQCLE) is disordered. T314 is subject to Phosphothreonine. Positions 314-327 (TPDTGNENEGQCLE) are enriched in polar residues.

In terms of assembly, component of the death-induced signaling complex (DISC) composed of cell surface receptor FAS/CD95, adapter protein FADD and the CASP8 protease; recruitment of CASP8 to the complex is required for processing of CASP8 into the p18 and p10 subunits. Interacts directly (via DED domain) with NOL3 (via CARD domain); inhibits death-inducing signaling complex (DISC) assembly by inhibiting the increase in FAS-FADD binding induced by FAS activation. Binds DAXX. Interacts with HIPK3. Part of a complex containing HIPK3 and FADD. Binds RIPK1 and FAIM2. Interacts with BABAM2 and FEM1B. Interacts with CALM. In the absence of stimulation, interacts with BIRC2, DDX3X and GSK3B. The interaction with BIRC2 and DDX3X is further enhanced upon receptor stimulation and accompanied by DDX3X and BIRC2 cleavage. In terms of processing, palmitoylated. Palmitoylation by ZDHHC7 prevents the lysosomal degradation of FAS regulating its expression at the plasma membrane. As to expression, detected in various tissues including thymus, liver, lung, heart, and adult ovary.

The protein resides in the cell membrane. It is found in the membrane raft. In terms of biological role, receptor for TNFSF6/FASLG. The adapter molecule FADD recruits caspase CASP8 to the activated receptor. The resulting death-inducing signaling complex (DISC) performs CASP8 proteolytic activation which initiates the subsequent cascade of caspases (aspartate-specific cysteine proteases) mediating apoptosis. FAS-mediated apoptosis may have a role in the induction of peripheral tolerance, in the antigen-stimulated suicide of mature T-cells, or both. The protein is Tumor necrosis factor receptor superfamily member 6 (Fas) of Mus musculus (Mouse).